The primary structure comprises 160 residues: Sperm acrosome-associated protein 5 (160 aa).

Residues 1-21 form the signal peptide; sequence MKVCSIVVVILAVLLIAKLDA. In terms of domain architecture, C-type lysozyme spans 22–150; sequence KIYERCELAK…SEWLKGCSVR (129 aa). 4 disulfide bridges follow: Cys27–Cys147, Cys51–Cys135, Cys85–Cys100, and Cys96–Cys114. Glu56 is an active-site residue.

It belongs to the glycosyl hydrolase 22 family.

The protein localises to the secreted. It catalyses the reaction Hydrolysis of (1-&gt;4)-beta-linkages between N-acetylmuramic acid and N-acetyl-D-glucosamine residues in a peptidoglycan and between N-acetyl-D-glucosamine residues in chitodextrins.. The chain is Sperm acrosome-associated protein 5 (Spaca5) from Mus musculus (Mouse).